The following is a 127-amino-acid chain: MRSEDRADNKSLGEQGEAIAVCYLKGRKYAIVERNFRCKCGEVDIIARDGKTIVFVEVKTRRNEACGPPQASVTPFKQRQISKAALTWLAKKMLLDAPARFDVVAILQRDHAVPEIEHIKDAFELAY.

This sequence belongs to the UPF0102 family.

This chain is UPF0102 protein Gura_3756, found in Geotalea uraniireducens (strain Rf4) (Geobacter uraniireducens).